A 1589-amino-acid chain; its full sequence is Paternally-expressed gene 3 protein (1589 aa).

The region spanning 46-128 (HQRFRNLIYV…TLLENYKEMY (83 aa)) is the SCAN box domain. Disordered regions lie at residues 128 to 230 (YQPE…ESYQ), 266 to 306 (DGHS…RRGI), and 319 to 349 (KFIKDVSRSSKSGRARESSDRSQRFPRMSDD). The segment covering 129–142 (QPEDDNNSDVTSDD) has biased composition (acidic residues). Composition is skewed to basic and acidic residues over residues 143–152 (DMTRNRRESS), 161–182 (SGDRDWDRRGRSRDMEPRDRWS), 206–225 (FEMDRDDDRDSRAYESRSQD), and 295–306 (PEAKKSTHRRGI). C2H2-type zinc fingers lie at residues 454–476 (YVCDECGRSFSVISEFVEHQIMH), 507–529 (FECKDCGETFNKSAALAEHRKIH), and 565–587 (YECRVCKETFLHSSALIEHQKIH). Residues 588 to 607 (FGDDKDNEREHERERERGET) show a composition bias toward basic and acidic residues. Residues 588–610 (FGDDKDNEREHERERERGETFRP) are disordered. The C2H2-type 4 zinc finger occupies 627–649 (YECKVCGETFLHSSSLKEHQKIH). The tract at residues 838–930 (LVASKPPRSH…EFSVPSSNVR (93 aa)) is disordered. Positions 868 to 881 (LNDKRQKIPARENP) are enriched in basic and acidic residues. The segment at 969-991 (YECQECGECFAHSSDLTEHQKIH) adopts a C2H2-type 5 zinc-finger fold. The interval 1056-1104 (EKSHGEESQGENTDGEETHSEETHGQETIEDPVIQSSDMEDPQKDDPDD) is disordered. The span at 1071–1082 (EETHSEETHGQE) shows a compositional bias: basic and acidic residues. C2H2-type zinc fingers lie at residues 1107 to 1129 (YECEDCGLGFVDLTDLTDHQKVH), 1163 to 1185 (YECPKCGESFIHSSFLFEHQRIH), 1225 to 1247 (IRCLLCGQGFIHSSALNEHMRLH), 1282 to 1304 (FECAVCGESFVNPAELADHVTVH), and 1332 to 1354 (YECKDCGKSFIHSTVLTKHKELH). The segment covering 1396–1416 (AEPEVEAAEPEVEAAEPEVEA) has biased composition (acidic residues). The interval 1396–1496 (AEPEVEAAEP…GIEDPEEGED (101 aa)) is disordered. 7 repeat units span residues 1398-1404 (PEVEAAE), 1405-1411 (PEVEAAE), 1412-1418 (PEVEAAE), 1419-1423 (PNGEA), 1426-1430 (PDGEA), 1433-1437 (PIGEA), and 1440-1444 (PNGEA). Residues 1398 to 1418 (PEVEAAEPEVEAAEPEVEAAE) are 3 X 7 AA repeat of P-E-V-E-A-A-E. The interval 1419–1444 (PNGEAEGPDGEAAEPIGEAGQPNGEA) is 4 X 5 AA repeat of P-X-G-E-A. 2 stretches are compositionally biased toward acidic residues: residues 1450–1467 (DADEPDGAGIEDPEERAE) and 1476–1496 (PEGDADEPDGVGIEDPEEGED). 2 consecutive C2H2-type zinc fingers follow at residues 1506–1528 (YDCHECTETFTSSTAFGEHLKTH) and 1565–1587 (FKCDVCGQLFNDRLSLARHQNTH).

It belongs to the krueppel C2H2-type zinc-finger protein family. Homodimer. Interacts with SIAH1A and SIAH2. Interacts with TRAF2.

The protein resides in the nucleus. It is found in the cytoplasm. Functionally, induces apoptosis in cooperation with SIAH1A. Acts as a mediator between p53/TP53 and BAX in a neuronal death pathway that is activated by DNA damage. Acts synergistically with TRAF2 and inhibits TNF induced apoptosis through activation of NF-kappa-B. This Gorilla gorilla gorilla (Western lowland gorilla) protein is Paternally-expressed gene 3 protein (PEG3).